We begin with the raw amino-acid sequence, 496 residues long: L-arabinose isomerase (496 aa).

Residues Glu-302, Glu-329, His-346, and His-445 each coordinate Mn(2+).

It belongs to the arabinose isomerase family. Requires Mn(2+) as cofactor.

The catalysed reaction is beta-L-arabinopyranose = L-ribulose. The protein operates within carbohydrate degradation; L-arabinose degradation via L-ribulose; D-xylulose 5-phosphate from L-arabinose (bacterial route): step 1/3. Catalyzes the conversion of L-arabinose to L-ribulose. This Thermotoga petrophila (strain ATCC BAA-488 / DSM 13995 / JCM 10881 / RKU-1) protein is L-arabinose isomerase.